Reading from the N-terminus, the 121-residue chain is UPF0091 protein PH1428 (121 aa).

This sequence belongs to the UPF0091 family.

The polypeptide is UPF0091 protein PH1428 (Pyrococcus horikoshii (strain ATCC 700860 / DSM 12428 / JCM 9974 / NBRC 100139 / OT-3)).